Reading from the N-terminus, the 366-residue chain is UDP-N-acetylenolpyruvoylglucosamine reductase (366 aa).

The region spanning 29–203 (VGPVARTLVT…LEVEFALDAS (175 aa)) is the FAD-binding PCMH-type domain. The active site involves Arg-177. Ser-258 acts as the Proton donor in catalysis. Glu-358 is a catalytic residue.

This sequence belongs to the MurB family. It depends on FAD as a cofactor.

It is found in the cytoplasm. It catalyses the reaction UDP-N-acetyl-alpha-D-muramate + NADP(+) = UDP-N-acetyl-3-O-(1-carboxyvinyl)-alpha-D-glucosamine + NADPH + H(+). The protein operates within cell wall biogenesis; peptidoglycan biosynthesis. Functionally, cell wall formation. The chain is UDP-N-acetylenolpyruvoylglucosamine reductase from Mycobacterium marinum (strain ATCC BAA-535 / M).